Here is a 359-residue protein sequence, read N- to C-terminus: Probable F-box protein At3g61730 (359 aa).

Composition is skewed to basic and acidic residues over residues 1–14 (MKTRSSDAEGDSRG) and 37–48 (QKNDIQREEDGR). Residues 1-60 (MKTRSSDAEGDSRGKMIAPVGEGNGGRKRKLVQSNEQKNDIQREEDGRAKRRIVQSSDQK) are disordered. Residues 82-128 (QSRFSWYEQDIWTYISRFLDGKSLVKLGATNKWFYKIAMEDTVWRFA) enclose the F-box; degenerate domain.

In terms of assembly, interacts with SKP1A. In terms of tissue distribution, expressed in flower buds, developing anthers, pollen grains, siliques, rosette leaves and roots. Detected at lower levels in open flowers, stems and cauline leaves. Expressed in young seedling in the hydathodes, shoot apical meristem, root tips and lateral root primordia.

It localises to the nucleus. Its function is as follows. Regulates tapetum degeneration and pollen maturation during anther development. In Arabidopsis thaliana (Mouse-ear cress), this protein is Probable F-box protein At3g61730 (RMF).